The sequence spans 670 residues: DNA ligase (670 aa).

NAD(+)-binding positions include Asp36 to Asp40, Ser85 to Leu86, and Glu116. The active-site N6-AMP-lysine intermediate is the Lys118. Residues Arg139, Glu174, Lys290, and Lys314 each contribute to the NAD(+) site. Zn(2+)-binding residues include Cys408, Cys411, Cys426, and Cys431. Positions Ser591–Gln670 constitute a BRCT domain.

This sequence belongs to the NAD-dependent DNA ligase family. LigA subfamily. Mg(2+) is required as a cofactor. It depends on Mn(2+) as a cofactor.

The enzyme catalyses NAD(+) + (deoxyribonucleotide)n-3'-hydroxyl + 5'-phospho-(deoxyribonucleotide)m = (deoxyribonucleotide)n+m + AMP + beta-nicotinamide D-nucleotide.. Its function is as follows. DNA ligase that catalyzes the formation of phosphodiester linkages between 5'-phosphoryl and 3'-hydroxyl groups in double-stranded DNA using NAD as a coenzyme and as the energy source for the reaction. It is essential for DNA replication and repair of damaged DNA. The polypeptide is DNA ligase (Desulforamulus reducens (strain ATCC BAA-1160 / DSM 100696 / MI-1) (Desulfotomaculum reducens)).